Here is a 418-residue protein sequence, read N- to C-terminus: Glutamyl-tRNA reductase (418 aa).

Substrate contacts are provided by residues 49–52, Ser-109, 114–116, and Gln-120; these read TCNR and EPQ. The active-site Nucleophile is the Cys-50. Residue 189–194 coordinates NADP(+); that stretch reads GAGETI.

It belongs to the glutamyl-tRNA reductase family. In terms of assembly, homodimer.

It catalyses the reaction (S)-4-amino-5-oxopentanoate + tRNA(Glu) + NADP(+) = L-glutamyl-tRNA(Glu) + NADPH + H(+). Its pathway is porphyrin-containing compound metabolism; protoporphyrin-IX biosynthesis; 5-aminolevulinate from L-glutamyl-tRNA(Glu): step 1/2. Functionally, catalyzes the NADPH-dependent reduction of glutamyl-tRNA(Glu) to glutamate 1-semialdehyde (GSA). The chain is Glutamyl-tRNA reductase from Escherichia coli O127:H6 (strain E2348/69 / EPEC).